The chain runs to 392 residues: GTPase Obg (392 aa).

The 159-residue stretch at 1–159 (MKFIDEALIR…RDLQLELMLL (159 aa)) folds into the Obg domain. Residues 160 to 333 (ADVGMLGLPN…LCRDIMDFIE (174 aa)) enclose the OBG-type G domain. Residues 166-173 (GLPNAGKS), 191-195 (FTTLV), 213-216 (DIPG), 283-286 (NKID), and 314-316 (SAA) each bind GTP. Mg(2+)-binding residues include S173 and T193. Positions 362–392 (EQVFTEDDQEGDDWDDWSEDDEEGVEIIYKP) are disordered. Residues 365 to 386 (FTEDDQEGDDWDDWSEDDEEGV) are compositionally biased toward acidic residues.

The protein belongs to the TRAFAC class OBG-HflX-like GTPase superfamily. OBG GTPase family. As to quaternary structure, monomer. The cofactor is Mg(2+).

Its subcellular location is the cytoplasm. Its function is as follows. An essential GTPase which binds GTP, GDP and possibly (p)ppGpp with moderate affinity, with high nucleotide exchange rates and a fairly low GTP hydrolysis rate. Plays a role in control of the cell cycle, stress response, ribosome biogenesis and in those bacteria that undergo differentiation, in morphogenesis control. The polypeptide is GTPase Obg (Histophilus somni (strain 129Pt) (Haemophilus somnus)).